We begin with the raw amino-acid sequence, 117 residues long: Large ribosomal subunit protein bL20c (117 aa).

This sequence belongs to the bacterial ribosomal protein bL20 family.

Its subcellular location is the plastid. The protein localises to the chloroplast. Functionally, binds directly to 23S ribosomal RNA and is necessary for the in vitro assembly process of the 50S ribosomal subunit. It is not involved in the protein synthesizing functions of that subunit. This is Large ribosomal subunit protein bL20c from Thalassiosira pseudonana (Marine diatom).